Consider the following 152-residue polypeptide: UPF0225 protein YchJ (152 aa).

Belongs to the UPF0225 family.

This is UPF0225 protein YchJ from Salmonella gallinarum (strain 287/91 / NCTC 13346).